The primary structure comprises 577 residues: Sensor histidine kinase YesM (577 aa).

At methionine 1 to lysine 17 the chain is on the cytoplasmic side. A helical membrane pass occupies residues leucine 18–glutamine 38. The Extracellular portion of the chain corresponds to tyrosine 39–serine 286. Residues phenylalanine 287–glycine 307 traverse the membrane as a helical segment. Residues arginine 308–valine 577 lie on the Cytoplasmic side of the membrane. An HAMP domain is found at asparagine 312 to glutamate 368. Residues glutamate 365–asparagine 574 enclose the Histidine kinase domain. Position 392 is a phosphohistidine; by autocatalysis (histidine 392).

Its subcellular location is the cell membrane. It catalyses the reaction ATP + protein L-histidine = ADP + protein N-phospho-L-histidine.. Functionally, member of the two-component regulatory system YesM/YesN. Probably activates YesN by phosphorylation. In Bacillus subtilis (strain 168), this protein is Sensor histidine kinase YesM (yesM).